The chain runs to 126 residues: uncharacterized protein (126 aa).

Residues 5 to 25 traverse the membrane as a helical segment; it reads LIQHITSIFVFSFFFLFFFFS.

The protein localises to the membrane. This is an uncharacterized protein from Saccharomyces cerevisiae (strain ATCC 204508 / S288c) (Baker's yeast).